A 484-amino-acid chain; its full sequence is UDP-N-acetylmuramate--L-alanine ligase (484 aa).

ATP is bound at residue 125 to 131; the sequence is GTHGKTT.

This sequence belongs to the MurCDEF family.

The protein localises to the cytoplasm. The catalysed reaction is UDP-N-acetyl-alpha-D-muramate + L-alanine + ATP = UDP-N-acetyl-alpha-D-muramoyl-L-alanine + ADP + phosphate + H(+). It functions in the pathway cell wall biogenesis; peptidoglycan biosynthesis. Cell wall formation. This is UDP-N-acetylmuramate--L-alanine ligase from Buchnera aphidicola subsp. Acyrthosiphon pisum (strain 5A).